The primary structure comprises 344 residues: MIDTLTIVRPDDWHLHLRDGDALADVVGDTARQFGRAIIMPNLKPPVTTTAQARAYRERILAALPAGTRFEPLMTLYLTDNTTPEEVRAARASGFVHGVKLYPAGATTNSDAGVTDLRRCAKTLEAMQDVGMPLLVHGEVTDPTVDIFDREAVFIDTVMQPLRRDFPALKVVFEHITTKHAAEYVRDAQGPVGATITAHHLLYNRNALFVGGIRPHYYCLPVLKRETHRLALVAAATSGHPRFFLGTDSAPHAKGLKEHACGCAGCYTALHAMELYAEAFEDANALDKLEGFASLHGPDFYGLPRNAGTLTLTRSQWQLPAEVPFGEQMLVPLRGGEMLRWKTV.

Residues His-14 and His-16 each contribute to the Zn(2+) site. Substrate contacts are provided by residues 16–18 (HLR) and Asn-42. Residues Lys-100, His-137, and His-175 each coordinate Zn(2+). At Lys-100 the chain carries N6-carboxylysine. His-137 is a substrate binding site. Substrate is bound at residue Leu-220. Asp-248 contributes to the Zn(2+) binding site. Residue Asp-248 is part of the active site. The substrate site is built by His-252 and Ala-264.

Belongs to the metallo-dependent hydrolases superfamily. DHOase family. Class II DHOase subfamily. As to quaternary structure, homodimer. Zn(2+) is required as a cofactor.

The enzyme catalyses (S)-dihydroorotate + H2O = N-carbamoyl-L-aspartate + H(+). It functions in the pathway pyrimidine metabolism; UMP biosynthesis via de novo pathway; (S)-dihydroorotate from bicarbonate: step 3/3. Its function is as follows. Catalyzes the reversible cyclization of carbamoyl aspartate to dihydroorotate. The chain is Dihydroorotase from Ralstonia nicotianae (strain ATCC BAA-1114 / GMI1000) (Ralstonia solanacearum).